Reading from the N-terminus, the 277-residue chain is Multiple sugar-binding transport system permease protein MsmG (277 aa).

6 consecutive transmembrane segments (helical) span residues 13-33, 74-94, 110-130, 141-161, 198-218, and 243-263; these read YVLL…TVFS, VITV…AYSI, LLIL…TVMM, LIIL…VGYI, TTLI…LLIL, and GPSF…YLIF. Residues 69–263 form the ABC transmembrane type-1 domain; that stretch reads FWNSTVITVL…ITITIVYLIF (195 aa).

This sequence belongs to the binding-protein-dependent transport system permease family. MalFG subfamily.

The protein resides in the cell membrane. Functionally, involved in a binding protein-dependent transport system responsible for the uptake of melibiose, raffinose and isomaltotriose. This Streptococcus mutans serotype c (strain ATCC 700610 / UA159) protein is Multiple sugar-binding transport system permease protein MsmG (msmG).